The chain runs to 227 residues: MAYPFQLGLQDATSPIMEELLHFHDHTLMIVFLISSLVLYIISLMLTTKLTHTSTMDAQEVETVWTILPAIILILIALLSLRILYMMDEINNPFLTMKTMGHQWYWSYEYTDYEDLNFDSYMIPTQELKPGELRLLEVDNRVILPMEMTVRMLISSEDVLHSWAVPSLGLKTDAIPGRLNQTTLMAMRPGLYYGQCSEICGSNHSFMPIVLEMVPLSYFETWSALMV.

Over 1 to 14 the chain is Mitochondrial intermembrane; that stretch reads MAYPFQLGLQDATS. A helical transmembrane segment spans residues 15 to 45; it reads PIMEELLHFHDHTLMIVFLISSLVLYIISLM. The Mitochondrial matrix portion of the chain corresponds to 46-59; sequence LTTKLTHTSTMDAQ. The helical transmembrane segment at 60 to 87 threads the bilayer; sequence EVETVWTILPAIILILIALLSLRILYMM. Topologically, residues 88-227 are mitochondrial intermembrane; the sequence is DEINNPFLTM…YFETWSALMV (140 aa). 6 residues coordinate Cu cation: His161, Cys196, Glu198, Cys200, His204, and Met207. Glu198 provides a ligand contact to Mg(2+). Tyr218 is subject to Phosphotyrosine.

The protein belongs to the cytochrome c oxidase subunit 2 family. In terms of assembly, component of the cytochrome c oxidase (complex IV, CIV), a multisubunit enzyme composed of 14 subunits. The complex is composed of a catalytic core of 3 subunits MT-CO1, MT-CO2 and MT-CO3, encoded in the mitochondrial DNA, and 11 supernumerary subunits COX4I, COX5A, COX5B, COX6A, COX6B, COX6C, COX7A, COX7B, COX7C, COX8 and NDUFA4, which are encoded in the nuclear genome. The complex exists as a monomer or a dimer and forms supercomplexes (SCs) in the inner mitochondrial membrane with NADH-ubiquinone oxidoreductase (complex I, CI) and ubiquinol-cytochrome c oxidoreductase (cytochrome b-c1 complex, complex III, CIII), resulting in different assemblies (supercomplex SCI(1)III(2)IV(1) and megacomplex MCI(2)III(2)IV(2)). Found in a complex with TMEM177, COA6, COX18, COX20, SCO1 and SCO2. Interacts with TMEM177 in a COX20-dependent manner. Interacts with COX20. Interacts with COX16. Cu cation serves as cofactor.

It localises to the mitochondrion inner membrane. It carries out the reaction 4 Fe(II)-[cytochrome c] + O2 + 8 H(+)(in) = 4 Fe(III)-[cytochrome c] + 2 H2O + 4 H(+)(out). Functionally, component of the cytochrome c oxidase, the last enzyme in the mitochondrial electron transport chain which drives oxidative phosphorylation. The respiratory chain contains 3 multisubunit complexes succinate dehydrogenase (complex II, CII), ubiquinol-cytochrome c oxidoreductase (cytochrome b-c1 complex, complex III, CIII) and cytochrome c oxidase (complex IV, CIV), that cooperate to transfer electrons derived from NADH and succinate to molecular oxygen, creating an electrochemical gradient over the inner membrane that drives transmembrane transport and the ATP synthase. Cytochrome c oxidase is the component of the respiratory chain that catalyzes the reduction of oxygen to water. Electrons originating from reduced cytochrome c in the intermembrane space (IMS) are transferred via the dinuclear copper A center (CU(A)) of subunit 2 and heme A of subunit 1 to the active site in subunit 1, a binuclear center (BNC) formed by heme A3 and copper B (CU(B)). The BNC reduces molecular oxygen to 2 water molecules using 4 electrons from cytochrome c in the IMS and 4 protons from the mitochondrial matrix. The protein is Cytochrome c oxidase subunit 2 (MT-CO2) of Nyctereutes procyonoides (Raccoon dog).